The primary structure comprises 716 residues: Polyribonucleotide nucleotidyltransferase (716 aa).

2 residues coordinate Mg(2+): Asp480 and Asp486. The KH domain occupies 547–606 (PKIVQLQIDIDKISLVIGSTGKTVKAITDEFEVKVQIEQNGKIILFGDDDFKMQKAKERI). Residues 616–711 (GEIYEGTVKK…KFGKIDLEIV (96 aa)) form the S1 motif domain.

This sequence belongs to the polyribonucleotide nucleotidyltransferase family. Mg(2+) serves as cofactor.

The protein localises to the cytoplasm. The enzyme catalyses RNA(n+1) + phosphate = RNA(n) + a ribonucleoside 5'-diphosphate. Functionally, involved in mRNA degradation. Catalyzes the phosphorolysis of single-stranded polyribonucleotides processively in the 3'- to 5'-direction. This is Polyribonucleotide nucleotidyltransferase from Borreliella burgdorferi (strain ATCC 35210 / DSM 4680 / CIP 102532 / B31) (Borrelia burgdorferi).